Here is a 428-residue protein sequence, read N- to C-terminus: 3-phosphoshikimate 1-carboxyvinyltransferase (428 aa).

3-phosphoshikimate contacts are provided by lysine 21, serine 22, and arginine 26. Phosphoenolpyruvate is bound at residue lysine 21. Residues glycine 91 and arginine 119 each contribute to the phosphoenolpyruvate site. Serine 164, glutamine 166, aspartate 313, and lysine 340 together coordinate 3-phosphoshikimate. Residue glutamine 166 coordinates phosphoenolpyruvate. Residue aspartate 313 is the Proton acceptor of the active site. 2 residues coordinate phosphoenolpyruvate: arginine 344 and arginine 386.

The protein belongs to the EPSP synthase family. Monomer.

It localises to the cytoplasm. The catalysed reaction is 3-phosphoshikimate + phosphoenolpyruvate = 5-O-(1-carboxyvinyl)-3-phosphoshikimate + phosphate. Its pathway is metabolic intermediate biosynthesis; chorismate biosynthesis; chorismate from D-erythrose 4-phosphate and phosphoenolpyruvate: step 6/7. In terms of biological role, catalyzes the transfer of the enolpyruvyl moiety of phosphoenolpyruvate (PEP) to the 5-hydroxyl of shikimate-3-phosphate (S3P) to produce enolpyruvyl shikimate-3-phosphate and inorganic phosphate. This is 3-phosphoshikimate 1-carboxyvinyltransferase from Campylobacter jejuni subsp. jejuni serotype O:6 (strain 81116 / NCTC 11828).